A 640-amino-acid polypeptide reads, in one-letter code: Protein cereblon (640 aa).

The segment covering 1 to 11 has biased composition (acidic residues); that stretch reads MDDEETAEIDE. Disordered regions lie at residues 1 to 25 and 92 to 159; these read MDDE…ELGP and REDP…EAVP. A compositionally biased stretch (low complexity) spans 113–137; that stretch reads QPAQQEEQASLPYDSPSRASISSRH. A Lon N-terminal domain is found at 278-506; sequence RMLIFMHQHI…IIDTTLKQES (229 aa). Residues 505-614 enclose the CULT domain; the sequence is ESLFYCRYCN…LAGSSVRIGK (110 aa). Cysteine 510, cysteine 513, cysteine 579, and cysteine 582 together coordinate Zn(2+).

It belongs to the CRBN family. Likely a component of a DCX (DDB1-CUL4-X-box) protein ligase complex. May interact with pic/DDB1. Ubiquitinated.

It is found in the nucleus. Its pathway is protein modification; protein ubiquitination. Functionally, substrate recognition component of a DCX (DDB1-CUL4-X-box) E3 protein ligase complex that mediates the ubiquitination and subsequent proteasomal degradation of target proteins. Has an essential role in mediating growth by negatively regulating insulin signaling. It also has a role in maintaining presynaptic function in the neuromuscular junction synapses of third-instar larvae. This is Protein cereblon from Drosophila virilis (Fruit fly).